Here is a 478-residue protein sequence, read N- to C-terminus: uncharacterized protein (478 aa).

Residues 5–85 (KRIYVGGLSS…SKLRIEEARP (81 aa)) form the RRM domain. Phosphoserine is present on residues S207 and S308.

The protein localises to the nucleus. It is found in the nucleolus. This is an uncharacterized protein from Schizosaccharomyces pombe (strain 972 / ATCC 24843) (Fission yeast).